The chain runs to 513 residues: uncharacterized protein (513 aa).

Residues 11 to 219 enclose the CYTH domain; that stretch reads HLEVERKFDV…SKLARVLGAT (209 aa). Positions 228–506 constitute a CHAD domain; that stretch reads PQPPADPVHR…LEAALRKLDK (279 aa).

This is an uncharacterized protein from Mycobacterium tuberculosis (strain CDC 1551 / Oshkosh).